The sequence spans 360 residues: Dihydroorotate dehydrogenase (quinone) (360 aa).

FMN contacts are provided by residues Ala-67–Lys-71 and Thr-91. Lys-71 is a binding site for substrate. Asn-116–Phe-120 serves as a coordination point for substrate. The FMN site is built by Asn-145 and Asn-176. Asn-176 is a substrate binding site. The active-site Nucleophile is Ser-179. Position 181 (Asn-181) interacts with substrate. FMN contacts are provided by Lys-222 and Ser-250. Residue Asn-251–Thr-252 participates in substrate binding. FMN contacts are provided by residues Gly-272, Gly-301, and Tyr-322–Ser-323.

It belongs to the dihydroorotate dehydrogenase family. Type 2 subfamily. In terms of assembly, monomer. Requires FMN as cofactor.

Its subcellular location is the cell membrane. The enzyme catalyses (S)-dihydroorotate + a quinone = orotate + a quinol. It participates in pyrimidine metabolism; UMP biosynthesis via de novo pathway; orotate from (S)-dihydroorotate (quinone route): step 1/1. Functionally, catalyzes the conversion of dihydroorotate to orotate with quinone as electron acceptor. This is Dihydroorotate dehydrogenase (quinone) from Deinococcus deserti (strain DSM 17065 / CIP 109153 / LMG 22923 / VCD115).